The sequence spans 251 residues: Flap endonuclease Xni (251 aa).

Asp104 lines the Mg(2+) pocket. Residues 160-249 (VLPRQLPDYW…IDGNLQQLRL (90 aa)) enclose the 5'-3' exonuclease domain. Leu171, Ala172, Pro180, Val182, and Ile185 together coordinate K(+). The interaction with DNA stretch occupies residues 184 to 189 (GIGPKS).

Belongs to the Xni family. Mg(2+) is required as a cofactor. K(+) serves as cofactor.

In terms of biological role, has flap endonuclease activity. During DNA replication, flap endonucleases cleave the 5'-overhanging flap structure that is generated by displacement synthesis when DNA polymerase encounters the 5'-end of a downstream Okazaki fragment. The sequence is that of Flap endonuclease Xni from Salmonella newport (strain SL254).